We begin with the raw amino-acid sequence, 233 residues long: uncharacterized protein (233 aa).

This sequence belongs to the LutC/YkgG family.

This is an uncharacterized protein from Neisseria meningitidis serogroup B (strain ATCC BAA-335 / MC58).